The primary structure comprises 138 residues: Small ribosomal subunit protein bS6 (138 aa).

The tract at residues 94–138 (VKQDGPLPTPKPTSKENEPEKEEVKPTEEKTESPSKDEKKEDSKE) is disordered. Over residues 106-138 (TSKENEPEKEEVKPTEEKTESPSKDEKKEDSKE) the composition is skewed to basic and acidic residues.

The protein belongs to the bacterial ribosomal protein bS6 family.

Binds together with bS18 to 16S ribosomal RNA. This chain is Small ribosomal subunit protein bS6, found in Prochlorococcus marinus (strain NATL2A).